The following is a 1137-amino-acid chain: Phytochrome C (1137 aa).

The span at M1–A18 shows a compositional bias: low complexity. The tract at residues M1 to V27 is disordered. The 184-residue stretch at N217–V400 folds into the GAF domain. C322 lines the phytochromobilin pocket. PAS domains follow at residues V620 to I690 and I750 to S824. The 221-residue stretch at Y904–Q1124 folds into the Histidine kinase domain.

This sequence belongs to the phytochrome family. Homodimer. Contains one covalently linked phytochromobilin chromophore.

Functionally, regulatory photoreceptor which exists in two forms that are reversibly interconvertible by light: the Pr form that absorbs maximally in the red region of the spectrum and the Pfr form that absorbs maximally in the far-red region. Photoconversion of Pr to Pfr induces an array of morphogenic responses, whereas reconversion of Pfr to Pr cancels the induction of those responses. Pfr controls the expression of a number of nuclear genes including those encoding the small subunit of ribulose-bisphosphate carboxylase, chlorophyll A/B binding protein, protochlorophyllide reductase, rRNA, etc. It also controls the expression of its own gene(s) in a negative feedback fashion. In Oryza sativa subsp. japonica (Rice), this protein is Phytochrome C (PHYC).